A 180-amino-acid chain; its full sequence is Der GTPase-activating protein YihI (180 aa).

Positions 1–10 (MKQPARTSQV) are enriched in polar residues. 2 disordered regions span residues 1 to 102 (MKQP…PRLT) and 158 to 180 (DAED…RTPE). Residues 21-32 (TREEINQEARDR) are compositionally biased toward basic and acidic residues. Positions 45-54 (SRANPATVSQ) are enriched in polar residues. Positions 55–67 (KGDKSQSVKDPRI) are enriched in basic and acidic residues. Over residues 84-93 (PANPVKAAKP) the composition is skewed to low complexity.

It belongs to the YihI family. Interacts with Der.

Its function is as follows. A GTPase-activating protein (GAP) that modifies Der/EngA GTPase function. May play a role in ribosome biogenesis. The protein is Der GTPase-activating protein YihI of Erwinia tasmaniensis (strain DSM 17950 / CFBP 7177 / CIP 109463 / NCPPB 4357 / Et1/99).